The following is a 519-amino-acid chain: Membrane-bound lytic murein transglycosylase F (519 aa).

An N-terminal signal peptide occupies residues 1-32 (MKKLKLNYLLIGVVTLLLAVALWPAIPWSGKA). The segment at 33–269 (DNRIAAIQAR…RLEEKYLGHG (237 aa)) is non-LT domain. The tract at residues 270 to 519 (NDFDYVDTRS…PNTLSPVSPR (250 aa)) is LT domain. Residue Glu-314 is part of the active site. Residues 495–519 (PFSQAGAGGKTHSALPNTLSPVSPR) are disordered. Positions 508 to 519 (ALPNTLSPVSPR) are enriched in polar residues.

In the N-terminal section; belongs to the bacterial solute-binding protein 3 family. It in the C-terminal section; belongs to the transglycosylase Slt family.

Its subcellular location is the cell outer membrane. It catalyses the reaction Exolytic cleavage of the (1-&gt;4)-beta-glycosidic linkage between N-acetylmuramic acid (MurNAc) and N-acetylglucosamine (GlcNAc) residues in peptidoglycan, from either the reducing or the non-reducing ends of the peptidoglycan chains, with concomitant formation of a 1,6-anhydrobond in the MurNAc residue.. Functionally, murein-degrading enzyme that degrades murein glycan strands and insoluble, high-molecular weight murein sacculi, with the concomitant formation of a 1,6-anhydromuramoyl product. Lytic transglycosylases (LTs) play an integral role in the metabolism of the peptidoglycan (PG) sacculus. Their lytic action creates space within the PG sacculus to allow for its expansion as well as for the insertion of various structures such as secretion systems and flagella. This Cronobacter sakazakii (strain ATCC BAA-894) (Enterobacter sakazakii) protein is Membrane-bound lytic murein transglycosylase F.